The primary structure comprises 197 residues: 7-methyl-GTP pyrophosphatase (197 aa).

Residue D73 is the Proton acceptor of the active site.

It belongs to the Maf family. YceF subfamily. A divalent metal cation is required as a cofactor.

It localises to the cytoplasm. It carries out the reaction N(7)-methyl-GTP + H2O = N(7)-methyl-GMP + diphosphate + H(+). Its function is as follows. Nucleoside triphosphate pyrophosphatase that hydrolyzes 7-methyl-GTP (m(7)GTP). May have a dual role in cell division arrest and in preventing the incorporation of modified nucleotides into cellular nucleic acids. The protein is 7-methyl-GTP pyrophosphatase of Alcanivorax borkumensis (strain ATCC 700651 / DSM 11573 / NCIMB 13689 / SK2).